The primary structure comprises 194 residues: MQKIMISDAAQAHFRRLLDQQEEGTHIRIFVVNPGTPNAECGVSYCPPNAVEATDTEMQYASFSAFVDEISLPFLDEAEIDYVTEELGAQLTLKAPNAKMRKVADDAPLLERVEYVIQTQINPQLAGHGGRITLIEITEDGYAILQFGGGCNGCSMVDVTLKDGIEKQLLSLFPGELQGAKDVTEHQRGEHSYY.

[4Fe-4S] cluster is bound by residues Cys-151 and Cys-154.

It belongs to the NfuA family. As to quaternary structure, homodimer. It depends on [4Fe-4S] cluster as a cofactor.

Involved in iron-sulfur cluster biogenesis. Binds a 4Fe-4S cluster, can transfer this cluster to apoproteins, and thereby intervenes in the maturation of Fe/S proteins. Could also act as a scaffold/chaperone for damaged Fe/S proteins. The chain is Fe/S biogenesis protein NfuA from Pasteurella multocida (strain Pm70).